Here is a 224-residue protein sequence, read N- to C-terminus: PKHD-type hydroxylase KPN78578_12210 (224 aa).

The Fe2OG dioxygenase domain occupies 77–176 (TISAPLFNRY…RQASFLWIQS (100 aa)). Fe cation-binding residues include histidine 95, aspartate 97, and histidine 157. Residue arginine 167 participates in 2-oxoglutarate binding.

Fe(2+) is required as a cofactor. L-ascorbate serves as cofactor.

The polypeptide is PKHD-type hydroxylase KPN78578_12210 (Klebsiella pneumoniae subsp. pneumoniae (strain ATCC 700721 / MGH 78578)).